The following is a 213-amino-acid chain: ATP-dependent dethiobiotin synthetase BioD (213 aa).

Position 12-17 (12-17 (NVGKTF)) interacts with ATP. Threonine 16 lines the Mg(2+) pocket. Lysine 36 is an active-site residue. Residue serine 40 coordinates substrate. ATP-binding positions include aspartate 53, 110–113 (EGTG), and 170–171 (NQ). Residues aspartate 53 and glutamate 110 each contribute to the Mg(2+) site.

This sequence belongs to the dethiobiotin synthetase family. In terms of assembly, homodimer. Mg(2+) serves as cofactor.

The protein localises to the cytoplasm. The enzyme catalyses (7R,8S)-7,8-diammoniononanoate + CO2 + ATP = (4R,5S)-dethiobiotin + ADP + phosphate + 3 H(+). It functions in the pathway cofactor biosynthesis; biotin biosynthesis; biotin from 7,8-diaminononanoate: step 1/2. Its function is as follows. Catalyzes a mechanistically unusual reaction, the ATP-dependent insertion of CO2 between the N7 and N8 nitrogen atoms of 7,8-diaminopelargonic acid (DAPA, also called 7,8-diammoniononanoate) to form a ureido ring. The polypeptide is ATP-dependent dethiobiotin synthetase BioD (Ruthia magnifica subsp. Calyptogena magnifica).